Reading from the N-terminus, the 273-residue chain is Phosphate import ATP-binding protein PstB (273 aa).

Positions 1–20 are disordered; that stretch reads MTTVSTAAASGPAVPPPRID. The ABC transporter domain maps to 27 to 268; that stretch reads VAARNLNFYY…PSDRRTQDYI (242 aa). An ATP-binding site is contributed by 59 to 66; that stretch reads GPSGCGKS.

The protein belongs to the ABC transporter superfamily. Phosphate importer (TC 3.A.1.7) family. As to quaternary structure, the complex is composed of two ATP-binding proteins (PstB), two transmembrane proteins (PstC and PstA) and a solute-binding protein (PstS).

The protein resides in the cell inner membrane. It catalyses the reaction phosphate(out) + ATP + H2O = ADP + 2 phosphate(in) + H(+). Its function is as follows. Part of the ABC transporter complex PstSACB involved in phosphate import. Responsible for energy coupling to the transport system. This chain is Phosphate import ATP-binding protein PstB, found in Nitrobacter winogradskyi (strain ATCC 25391 / DSM 10237 / CIP 104748 / NCIMB 11846 / Nb-255).